Here is a 176-residue protein sequence, read N- to C-terminus: 3-hydroxydecanoyl-[acyl-carrier-protein] dehydratase (176 aa).

H75 is a catalytic residue.

The protein belongs to the thioester dehydratase family. FabA subfamily. As to quaternary structure, homodimer.

It localises to the cytoplasm. It catalyses the reaction a (3R)-hydroxyacyl-[ACP] = a (2E)-enoyl-[ACP] + H2O. It carries out the reaction (3R)-hydroxydecanoyl-[ACP] = (2E)-decenoyl-[ACP] + H2O. The catalysed reaction is (2E)-decenoyl-[ACP] = (3Z)-decenoyl-[ACP]. Its pathway is lipid metabolism; fatty acid biosynthesis. Necessary for the introduction of cis unsaturation into fatty acids. Catalyzes the dehydration of (3R)-3-hydroxydecanoyl-ACP to E-(2)-decenoyl-ACP and then its isomerization to Z-(3)-decenoyl-ACP. Can catalyze the dehydratase reaction for beta-hydroxyacyl-ACPs with saturated chain lengths up to 16:0, being most active on intermediate chain length. This chain is 3-hydroxydecanoyl-[acyl-carrier-protein] dehydratase, found in Actinobacillus pleuropneumoniae serotype 5b (strain L20).